A 628-amino-acid chain; its full sequence is 1-deoxy-D-xylulose-5-phosphate synthase (628 aa).

Thiamine diphosphate contacts are provided by residues histidine 72 and 113–115 (GHS). Aspartate 144 contributes to the Mg(2+) binding site. Thiamine diphosphate contacts are provided by residues 145 to 146 (GA), asparagine 173, tyrosine 284, and glutamate 363. Residue asparagine 173 participates in Mg(2+) binding.

The protein belongs to the transketolase family. DXPS subfamily. As to quaternary structure, homodimer. Requires Mg(2+) as cofactor. It depends on thiamine diphosphate as a cofactor.

It carries out the reaction D-glyceraldehyde 3-phosphate + pyruvate + H(+) = 1-deoxy-D-xylulose 5-phosphate + CO2. The protein operates within metabolic intermediate biosynthesis; 1-deoxy-D-xylulose 5-phosphate biosynthesis; 1-deoxy-D-xylulose 5-phosphate from D-glyceraldehyde 3-phosphate and pyruvate: step 1/1. In terms of biological role, catalyzes the acyloin condensation reaction between C atoms 2 and 3 of pyruvate and glyceraldehyde 3-phosphate to yield 1-deoxy-D-xylulose-5-phosphate (DXP). The polypeptide is 1-deoxy-D-xylulose-5-phosphate synthase (Brevibacillus brevis (strain 47 / JCM 6285 / NBRC 100599)).